Reading from the N-terminus, the 301-residue chain is Thiosulfate sulfurtransferase (301 aa).

Rhodanese domains are found at residues 31-138 and 171-289; these read GSPG…DTSY and QSGG…MPIE. The active-site Cysteine persulfide intermediate is the Cys-248. Residue Arg-253 participates in substrate binding.

It carries out the reaction thiosulfate + hydrogen cyanide = thiocyanate + sulfite + 2 H(+). The polypeptide is Thiosulfate sulfurtransferase (thtR) (Corynebacterium glutamicum (strain ATCC 13032 / DSM 20300 / JCM 1318 / BCRC 11384 / CCUG 27702 / LMG 3730 / NBRC 12168 / NCIMB 10025 / NRRL B-2784 / 534)).